We begin with the raw amino-acid sequence, 341 residues long: Anthranilate phosphoribosyltransferase (341 aa).

Residues Gly-80, 83 to 84 (GD), Thr-88, 90 to 93 (NIST), 108 to 116 (KHGNRSVSS), and Ser-120 contribute to the 5-phospho-alpha-D-ribose 1-diphosphate site. Gly-80 is an anthranilate binding site. Ser-92 provides a ligand contact to Mg(2+). Asn-111 lines the anthranilate pocket. Anthranilate is bound at residue Arg-166. Residues Asp-225 and Glu-226 each contribute to the Mg(2+) site.

The protein belongs to the anthranilate phosphoribosyltransferase family. In terms of assembly, homodimer. Mg(2+) is required as a cofactor.

It catalyses the reaction N-(5-phospho-beta-D-ribosyl)anthranilate + diphosphate = 5-phospho-alpha-D-ribose 1-diphosphate + anthranilate. It participates in amino-acid biosynthesis; L-tryptophan biosynthesis; L-tryptophan from chorismate: step 2/5. Catalyzes the transfer of the phosphoribosyl group of 5-phosphorylribose-1-pyrophosphate (PRPP) to anthranilate to yield N-(5'-phosphoribosyl)-anthranilate (PRA). This chain is Anthranilate phosphoribosyltransferase, found in Shouchella clausii (strain KSM-K16) (Alkalihalobacillus clausii).